Here is a 500-residue protein sequence, read N- to C-terminus: Protein FAM83F (500 aa).

Ala2 is subject to N-acetylalanine. Residues 2 to 300 are DUF1669; the sequence is AESQLNCLDE…LYAISEEVDL (299 aa). Ser4 carries the phosphoserine modification. 3 disordered regions span residues 82–109, 347–366, and 391–500; these read NARGKSKAKAKAPAPAPAESGESLAYWP, QQREAGGNPEGQEEGASGGE, and IPLG…CVIS. The segment covering 397–419 has biased composition (basic and acidic residues); that stretch reads SQKDGRMVSHMHRDLKPKSREAP. 2 stretches are compositionally biased toward low complexity: residues 425 to 442 and 458 to 468; these read GEAARGEAAPARRFSSRL and SSVSTETSEVE. A compositionally biased stretch (polar residues) spans 477-500; it reads ENSSADISGKTSPSSAKPSNCVIS. Ser479 is modified (phosphoserine).

Belongs to the FAM83 family. Directly interacts (via DUF1669) with CSNK1A1 and CSNK1A1L.

The protein resides in the cell membrane. This chain is Protein FAM83F (FAM83F), found in Homo sapiens (Human).